The chain runs to 170 residues: TFIIB-type zinc finger protein (170 aa).

The TFIIB-type zinc-finger motif lies at 1-30 (MECPVCGSNEIVWDNKNGEVVCSNCGIIID). Zn(2+) is bound by residues C3, C6, C22, and C25.

This sequence belongs to the TFIIB family. It depends on Zn(2+) as a cofactor.

In Saccharolobus shibatae (strain ATCC 51178 / DSM 5389 / JCM 8931 / NBRC 15437 / B12) (Sulfolobus shibatae), this protein is TFIIB-type zinc finger protein.